An 886-amino-acid polypeptide reads, in one-letter code: CRM-domain containing factor CFM3, chloroplastic/mitochondrial (886 aa).

A chloroplast and mitochondrion-targeting transit peptide spans Met1 to Ser70. Disordered regions lie at residues Arg56–Ser84 and Thr269–His291. 3 CRM domains span residues Leu174–Lys270, Pro378–Glu475, and Glu590–Arg690. Polar residues predominate over residues Lys270–Met281. A disordered region spans residues Ser771–Ser886. Positions Asn793–Val827 are enriched in acidic residues. Polar residues-rich tracts occupy residues Asp841 to Ser852 and Asp869 to Ser886.

As to quaternary structure, interacts with RNA. Part of large ribonucleo-protein particles that contain CAF1 and/or CAF2, and RNC1.

The protein localises to the plastid. It localises to the chloroplast. It is found in the mitochondrion. Functionally, binds specific group II introns in chloroplasts and facilitates their splicing. Acts on subgroup IIB introns. The substrates of the subgroup IIB also require the CRM domain proteins CAF1 or CAF2, with a simultaneous binding of CFM3 and CAF1 or CAF2. May influence the biogenesis of the mitochondrial small ribosomal subunit. The sequence is that of CRM-domain containing factor CFM3, chloroplastic/mitochondrial from Oryza sativa subsp. japonica (Rice).